Consider the following 302-residue polypeptide: 33 kDa chaperonin (302 aa).

Cystine bridges form between Cys234–Cys236 and Cys267–Cys270.

This sequence belongs to the HSP33 family. Under oxidizing conditions two disulfide bonds are formed involving the reactive cysteines. Under reducing conditions zinc is bound to the reactive cysteines and the protein is inactive.

Its subcellular location is the cytoplasm. Redox regulated molecular chaperone. Protects both thermally unfolding and oxidatively damaged proteins from irreversible aggregation. Plays an important role in the bacterial defense system toward oxidative stress. The chain is 33 kDa chaperonin from Neisseria meningitidis serogroup B (strain ATCC BAA-335 / MC58).